Consider the following 329-residue polypeptide: Flotillin-like protein FloA (329 aa).

The next 2 membrane-spanning stretches (helical) occupy residues 6-26 (FIVI…FVPI) and 27-47 (GLWI…LVGM).

The protein belongs to the flotillin-like FloA family. As to quaternary structure, homooligomerizes.

It localises to the cell membrane. It is found in the membrane raft. Its function is as follows. Found in functional membrane microdomains (FMM) that may be equivalent to eukaryotic membrane rafts. FMMs are highly dynamic and increase in number as cells age. Flotillins are thought to be important factors in membrane fluidity. This Staphylococcus aureus (strain USA300) protein is Flotillin-like protein FloA.